A 622-amino-acid polypeptide reads, in one-letter code: Threonine--tRNA ligase (622 aa).

Residues 1 to 141 (MKTLLIHSDY…SRKITTERKE (141 aa)) form an editing domain region. The tract at residues 199–498 (PHVKYIKEKE…TLENKPPALP (300 aa)) is catalytic. Zn(2+) is bound by residues cysteine 291, histidine 343, and histidine 467.

Belongs to the class-II aminoacyl-tRNA synthetase family. In terms of assembly, homodimer. Zn(2+) is required as a cofactor.

The protein localises to the cytoplasm. The catalysed reaction is tRNA(Thr) + L-threonine + ATP = L-threonyl-tRNA(Thr) + AMP + diphosphate + H(+). Its function is as follows. Catalyzes the attachment of threonine to tRNA(Thr) in a two-step reaction: L-threonine is first activated by ATP to form Thr-AMP and then transferred to the acceptor end of tRNA(Thr). Also edits incorrectly charged L-seryl-tRNA(Thr). The protein is Threonine--tRNA ligase of Methanococcus maripaludis (strain C7 / ATCC BAA-1331).